The following is a 164-amino-acid chain: Glycine cleavage system H protein, mitochondrial (164 aa).

Residues 1–34 constitute a mitochondrion transit peptide; the sequence is MALRLWASSAANALKISCSGATRAAPAYSISRYF. The 83-residue stretch at 56 to 138 folds into the Lipoyl-binding domain; that stretch reads VATIGITDHA…YEDGWMIKVK (83 aa). Lysine 97 bears the N6-lipoyllysine mark.

It belongs to the GcvH family. In terms of assembly, the glycine cleavage system is composed of four proteins: P, T, L and H. (R)-lipoate is required as a cofactor.

It localises to the mitochondrion. The glycine cleavage system catalyzes the degradation of glycine. The H protein shuttles the methylamine group of glycine from the P protein to the T protein. The protein is Glycine cleavage system H protein, mitochondrial (GDCSH) of Oryza sativa subsp. indica (Rice).